A 684-amino-acid polypeptide reads, in one-letter code: Galactocerebrosidase (684 aa).

Positions 1–42 (MANSQPKASQQRQAKVMTAAAGSASRVAVPLLLCALLVPGGA) are cleaved as a signal peptide. Substrate-binding residues include Thr109, Trp151, and Asn197. The Proton donor/acceptor role is filled by Glu198. Catalysis depends on Glu274, which acts as the Nucleophile. Cys287 and Cys394 are disulfide-bonded. Residues Asn300 and Asn379 are each glycosylated (N-linked (GlcNAc...) asparagine). Residue Arg396 coordinates substrate. 4 N-linked (GlcNAc...) asparagine glycosylation sites follow: Asn403, Asn558, Asn601, and Asn645.

The protein belongs to the glycosyl hydrolase 59 family. Detected in brain and kidney.

The protein localises to the lysosome. It catalyses the reaction a beta-D-galactosyl-(1&lt;-&gt;1')-N-acylsphing-4-enine + H2O = an N-acylsphing-4-enine + D-galactose. The catalysed reaction is a D-galactosylceramide + H2O = an N-acyl-sphingoid base + D-galactose. The enzyme catalyses beta-D-galactosyl-(1&lt;-&gt;1)-sphing-4-enine + H2O = sphing-4-enine + D-galactose. Hydrolyzes the galactose ester bonds of glycolipids such as galactosylceramide and galactosylsphingosine. Enzyme with very low activity responsible for the lysosomal catabolism of galactosylceramide, a major lipid in myelin, kidney and epithelial cells of small intestine and colon. The polypeptide is Galactocerebrosidase (Mus musculus (Mouse)).